Here is a 470-residue protein sequence, read N- to C-terminus: ATP synthase subunit beta (470 aa).

ATP is bound at residue 157–164 (GGAGVGKT).

Belongs to the ATPase alpha/beta chains family. F-type ATPases have 2 components, CF(1) - the catalytic core - and CF(0) - the membrane proton channel. CF(1) has five subunits: alpha(3), beta(3), gamma(1), delta(1), epsilon(1). CF(0) has three main subunits: a(1), b(2) and c(9-12). The alpha and beta chains form an alternating ring which encloses part of the gamma chain. CF(1) is attached to CF(0) by a central stalk formed by the gamma and epsilon chains, while a peripheral stalk is formed by the delta and b chains.

The protein localises to the cell inner membrane. It carries out the reaction ATP + H2O + 4 H(+)(in) = ADP + phosphate + 5 H(+)(out). Its function is as follows. Produces ATP from ADP in the presence of a proton gradient across the membrane. The catalytic sites are hosted primarily by the beta subunits. The polypeptide is ATP synthase subunit beta (Geobacter sp. (strain M21)).